Consider the following 182-residue polypeptide: ATP synthase subunit delta (182 aa).

Belongs to the ATPase delta chain family. F-type ATPases have 2 components, F(1) - the catalytic core - and F(0) - the membrane proton channel. F(1) has five subunits: alpha(3), beta(3), gamma(1), delta(1), epsilon(1). CF(0) has four main subunits: a(1), b(1), b'(1) and c(10-14). The alpha and beta chains form an alternating ring which encloses part of the gamma chain. F(1) is attached to F(0) by a central stalk formed by the gamma and epsilon chains, while a peripheral stalk is formed by the delta, b and b' chains.

The protein resides in the cellular thylakoid membrane. In terms of biological role, f(1)F(0) ATP synthase produces ATP from ADP in the presence of a proton or sodium gradient. F-type ATPases consist of two structural domains, F(1) containing the extramembraneous catalytic core and F(0) containing the membrane proton channel, linked together by a central stalk and a peripheral stalk. During catalysis, ATP synthesis in the catalytic domain of F(1) is coupled via a rotary mechanism of the central stalk subunits to proton translocation. This protein is part of the stalk that links CF(0) to CF(1). It either transmits conformational changes from CF(0) to CF(1) or is implicated in proton conduction. The chain is ATP synthase subunit delta from Prochlorococcus marinus (strain NATL1A).